A 1807-amino-acid polypeptide reads, in one-letter code: Integrin beta-4 (1807 aa).

The signal sequence occupies residues 1 to 27; the sequence is MAGLCSSPWVKLLLAVVLSAGLPGNMA. The Extracellular portion of the chain corresponds to 28 to 713; that stretch reads NRCKKAQVKS…KKKDCLPAPS (686 aa). Positions 29–73 constitute a PSI domain; that stretch reads RCKKAQVKSCTECIRVDKSCAYCTDELFKERRCNTQADVLAAGCR. 8 disulfide bridges follow: cysteine 30–cysteine 48, cysteine 38–cysteine 456, cysteine 41–cysteine 61, cysteine 51–cysteine 72, cysteine 245–cysteine 288, cysteine 458–cysteine 477, cysteine 469–cysteine 480, and cysteine 482–cysteine 491. In terms of domain architecture, VWFA spans 131–340; sequence DLYILMDFSN…SYYEKLHKYF (210 aa). Mg(2+)-binding residues include serine 139 and serine 141. Positions 141, 144, 145, and 176 each coordinate Ca(2+). Residues 194–199 form an involved in NRG1- and IGF1-binding region; that stretch reads WPNSDP. Residues asparagine 228, aspartate 230, proline 232, and glutamate 233 each coordinate Ca(2+). A Mg(2+)-binding site is contributed by glutamate 233. Asparagine 327 carries N-linked (GlcNAc...) asparagine glycosylation. Glutamate 350 provides a ligand contact to Ca(2+). I-EGF domains are found at residues 458–492, 493–538, 539–575, and 576–617; these read CELQ…KTCN, CSTG…HFCE, YDNF…RSCD, and CPLS…TTCE. The N-linked (GlcNAc...) asparagine glycan is linked to asparagine 492. 11 disulfide bridges follow: cysteine 493/cysteine 521, cysteine 504/cysteine 519, cysteine 513/cysteine 524, cysteine 526/cysteine 537, cysteine 544/cysteine 558, cysteine 552/cysteine 563, cysteine 565/cysteine 574, cysteine 576/cysteine 599, cysteine 583/cysteine 597, cysteine 591/cysteine 602, and cysteine 604/cysteine 616. Asparagine 580 carries N-linked (GlcNAc...) asparagine glycosylation. Asparagine 619 carries N-linked (GlcNAc...) asparagine glycosylation. Disulfide bonds link cysteine 628–cysteine 673, cysteine 634–cysteine 653, cysteine 637–cysteine 650, and cysteine 682–cysteine 708. N-linked (GlcNAc...) asparagine glycosylation is present at asparagine 697. A helical transmembrane segment spans residues 714–734; the sequence is WWLIPLLIFLLLLLVLLLLLC. The segment at 734 to 751 is palmitoylated on several cysteines; sequence CWKYCACCKACLGLLPCC. The Cytoplasmic portion of the chain corresponds to 735 to 1807; sequence WKYCACCKAC…THMDQQFFQT (1073 aa). Serine 773, serine 1071, and serine 1121 each carry phosphoserine. The Calx-beta domain occupies 981–1086; that stretch reads VNITIIKEQA…QVRRFQVQLS (106 aa). The disordered stretch occupies residues 1119 to 1141; the sequence is SASPPLPRGDLGAPQNPNAKAAG. Fibronectin type-III domains lie at 1131–1220 and 1224–1323; these read APQN…THQE and EPGR…TQPK. Serine 1386, serine 1389, and serine 1405 each carry phosphoserine. Threonine 1418 is modified (phosphothreonine). Phosphoserine is present on serine 1425. Threonine 1514 is subject to Phosphothreonine. Fibronectin type-III domains follow at residues 1514–1609 and 1627–1723; these read TPTR…VHPQ and APGP…SQDG. Phosphoserine is present on serine 1776.

It belongs to the integrin beta chain family. As to quaternary structure, heterodimer of an alpha and a beta subunit. Beta-4 associates with alpha-6. Interacts (via cytoplasmic region) with COL17A1 (via cytoplasmic region). Interacts (via cytoplasmic region) with DST isoform 3 (via N-terminus). Interacts (via cytoplasmic domain) with DST (via N-terminus). Interacts with RAC1. ITGA6:ITGB4 is found in a ternary complex with NRG1 and ERBB3. ITGA6:ITGB4 is found in a ternary complex with IGF1 and IGF1R. ITGA6:ITGB4 interacts with IGF2. Interacts with TMEM268; this interaction prevents ITGB4 degradation. Palmitoylated by DHHC3 at several cysteines of the membrane-proximal region, enhancing stability and cell surface expression. Palmitoylation also promotes secondary association with tertaspanins.

It is found in the cell membrane. It localises to the cell junction. The protein localises to the hemidesmosome. Functionally, integrin alpha-6/beta-4 is a receptor for laminin. It plays a critical structural role in the hemidesmosome of epithelial cells. Is required for the regulation of keratinocyte polarity and motility. ITGA6:ITGB4 binds to NRG1 (via EGF domain) and this binding is essential for NRG1-ERBB signaling. ITGA6:ITGB4 binds to IGF1 and this binding is essential for IGF1 signaling. ITGA6:ITGB4 binds to IGF2 and this binding is essential for IGF2 signaling. This chain is Integrin beta-4 (Itgb4), found in Rattus norvegicus (Rat).